The following is an 84-amino-acid chain: RNA-binding protein Hfq (84 aa).

Positions 9 to 69 (DRFLNILRTN…VSTIMPESFV (61 aa)) constitute a Sm domain.

It belongs to the Hfq family. As to quaternary structure, homohexamer.

Its function is as follows. RNA chaperone that binds small regulatory RNA (sRNAs) and mRNAs to facilitate mRNA translational regulation in response to envelope stress, environmental stress and changes in metabolite concentrations. Also binds with high specificity to tRNAs. The polypeptide is RNA-binding protein Hfq (Thermosipho africanus (strain TCF52B)).